The sequence spans 227 residues: Potassium/proton antiporter CemA (227 aa).

Helical transmembrane passes span S5–F25, I112–I132, L143–H163, and I187–I207.

Belongs to the CemA family.

The protein resides in the plastid. It localises to the chloroplast inner membrane. It carries out the reaction K(+)(in) + H(+)(out) = K(+)(out) + H(+)(in). Contributes to K(+)/H(+) antiport activity by supporting proton efflux to control proton extrusion and homeostasis in chloroplasts in a light-dependent manner to modulate photosynthesis. Prevents excessive induction of non-photochemical quenching (NPQ) under continuous-light conditions. Indirectly promotes efficient inorganic carbon uptake into chloroplasts. The chain is Potassium/proton antiporter CemA from Phaseolus vulgaris (Kidney bean).